The sequence spans 103 residues: Small ribosomal subunit protein uS10 (103 aa).

Belongs to the universal ribosomal protein uS10 family. Part of the 30S ribosomal subunit.

Involved in the binding of tRNA to the ribosomes. In Ruminiclostridium cellulolyticum (strain ATCC 35319 / DSM 5812 / JCM 6584 / H10) (Clostridium cellulolyticum), this protein is Small ribosomal subunit protein uS10.